The sequence spans 421 residues: Voltage-dependent calcium channel gamma-8 subunit (421 aa).

4 helical membrane passes run 19–39, 127–147, 157–177, and 207–227; these read VQVL…TIAI, SSIF…CVAA, IILG…IGVI, and FGGL…NIYI. Ser251 and Ser254 each carry phosphoserine. A disordered region spans residues 271 to 304; sequence RRSRSSSRGSSEASPSRDASPGGPGGPGFASTDI. Over residues 276-287 the composition is skewed to low complexity; sequence SSRGSSEASPSR. A helical membrane pass occupies residues 318–338; it reads VAAGLASAGGGGGGAGVGAYG. Disordered regions lie at residues 342–363 and 378–421; these read GAAG…GFLT and VTVT…TTPV. A compositionally biased stretch (pro residues) spans 384–397; sequence PAAPAPAPPAPAAP. Positions 408 to 421 are enriched in polar residues; sequence ASNTNTLNRKTTPV.

This sequence belongs to the PMP-22/EMP/MP20 family. CACNG subfamily. In terms of assembly, interacts with CACNA1C. Identified in a complex with the L-type calcium channel subunits CACNA1C, CACNA2D1 and either CACNB1 or CACNB2. Acts as an auxiliary subunit for AMPA-selective glutamate receptors (AMPARs). Found in a complex with GRIA1, GRIA2, GRIA3, GRIA4, CNIH2, CNIH3, CACNG2, CACNG3, CACNG4, CACNG5 and CACNG7. Interacts with CNIH2. Found in a complex with GRIA1, GRIA2, GRIA3, GRIA4, DLG4 and CNIH2. Post-translationally, palmitoylated. Probably palmitoylated by ZDHHC3 and ZDHHC7.

It is found in the cell membrane. Its subcellular location is the postsynaptic density membrane. Functionally, regulates the activity of L-type calcium channels that contain CACNA1C as pore-forming subunit. Regulates the trafficking and gating properties of AMPA-selective glutamate receptors (AMPARs). Promotes their targeting to the cell membrane and synapses and modulates their gating properties by slowing their rates of activation, deactivation and desensitization and by mediating their resensitization. Does not show subunit-specific AMPA receptor regulation and regulates all AMPAR subunits. Thought to stabilize the calcium channel in an inactivated (closed) state. The protein is Voltage-dependent calcium channel gamma-8 subunit of Rattus norvegicus (Rat).